Consider the following 158-residue polypeptide: NAD(P)H-quinone oxidoreductase subunit J, chloroplastic (158 aa).

This sequence belongs to the complex I 30 kDa subunit family. NDH is composed of at least 16 different subunits, 5 of which are encoded in the nucleus.

Its subcellular location is the plastid. It is found in the chloroplast thylakoid membrane. It carries out the reaction a plastoquinone + NADH + (n+1) H(+)(in) = a plastoquinol + NAD(+) + n H(+)(out). The enzyme catalyses a plastoquinone + NADPH + (n+1) H(+)(in) = a plastoquinol + NADP(+) + n H(+)(out). Its function is as follows. NDH shuttles electrons from NAD(P)H:plastoquinone, via FMN and iron-sulfur (Fe-S) centers, to quinones in the photosynthetic chain and possibly in a chloroplast respiratory chain. The immediate electron acceptor for the enzyme in this species is believed to be plastoquinone. Couples the redox reaction to proton translocation, and thus conserves the redox energy in a proton gradient. This Platanus occidentalis (Sycamore) protein is NAD(P)H-quinone oxidoreductase subunit J, chloroplastic.